The sequence spans 326 residues: Tetraacyldisaccharide 4'-kinase (326 aa).

Residue 55-62 (TVGGNGKT) coordinates ATP.

The protein belongs to the LpxK family.

It carries out the reaction a lipid A disaccharide + ATP = a lipid IVA + ADP + H(+). The protein operates within glycolipid biosynthesis; lipid IV(A) biosynthesis; lipid IV(A) from (3R)-3-hydroxytetradecanoyl-[acyl-carrier-protein] and UDP-N-acetyl-alpha-D-glucosamine: step 6/6. Transfers the gamma-phosphate of ATP to the 4'-position of a tetraacyldisaccharide 1-phosphate intermediate (termed DS-1-P) to form tetraacyldisaccharide 1,4'-bis-phosphate (lipid IVA). The chain is Tetraacyldisaccharide 4'-kinase from Tolumonas auensis (strain DSM 9187 / NBRC 110442 / TA 4).